The chain runs to 208 residues: Small ribosomal subunit protein uS4 (208 aa).

Positions 98–161 (QRLDNVVYRM…KTNSQILRAI (64 aa)) constitute an S4 RNA-binding domain.

It belongs to the universal ribosomal protein uS4 family. In terms of assembly, part of the 30S ribosomal subunit. Contacts protein S5. The interaction surface between S4 and S5 is involved in control of translational fidelity.

Functionally, one of the primary rRNA binding proteins, it binds directly to 16S rRNA where it nucleates assembly of the body of the 30S subunit. In terms of biological role, with S5 and S12 plays an important role in translational accuracy. The chain is Small ribosomal subunit protein uS4 from Sulfurovum sp. (strain NBC37-1).